Consider the following 217-residue polypeptide: Orotate phosphoribosyltransferase (217 aa).

Position 26 (K26) interacts with 5-phospho-alpha-D-ribose 1-diphosphate. 34–35 (FF) provides a ligand contact to orotate. 5-phospho-alpha-D-ribose 1-diphosphate is bound by residues 72 to 73 (YK), R99, K100, K103, H105, and 124 to 132 (DDVITAGTA). Residues T128 and R156 each coordinate orotate.

It belongs to the purine/pyrimidine phosphoribosyltransferase family. PyrE subfamily. In terms of assembly, homodimer. It depends on Mg(2+) as a cofactor.

The enzyme catalyses orotidine 5'-phosphate + diphosphate = orotate + 5-phospho-alpha-D-ribose 1-diphosphate. It participates in pyrimidine metabolism; UMP biosynthesis via de novo pathway; UMP from orotate: step 1/2. Catalyzes the transfer of a ribosyl phosphate group from 5-phosphoribose 1-diphosphate to orotate, leading to the formation of orotidine monophosphate (OMP). This is Orotate phosphoribosyltransferase from Aeromonas salmonicida (strain A449).